A 795-amino-acid polypeptide reads, in one-letter code: Phenylalanine--tRNA ligase beta subunit (795 aa).

One can recognise a tRNA-binding domain in the interval 39–148 (AGAFHGVVVG…ADAPIGTDIR (110 aa)). Positions 401 to 476 (PTRATITLRR…RIYGYNNIPN (76 aa)) constitute a B5 domain. Mg(2+) is bound by residues aspartate 454, aspartate 460, glutamate 463, and glutamate 464. Residues 701–794 (SRFPANRRDI…LKQRFQASLR (94 aa)) form the FDX-ACB domain.

The protein belongs to the phenylalanyl-tRNA synthetase beta subunit family. Type 1 subfamily. As to quaternary structure, tetramer of two alpha and two beta subunits. Mg(2+) is required as a cofactor.

It localises to the cytoplasm. The catalysed reaction is tRNA(Phe) + L-phenylalanine + ATP = L-phenylalanyl-tRNA(Phe) + AMP + diphosphate + H(+). The chain is Phenylalanine--tRNA ligase beta subunit from Pectobacterium atrosepticum (strain SCRI 1043 / ATCC BAA-672) (Erwinia carotovora subsp. atroseptica).